The sequence spans 147 residues: MSLKRINKELSDLGRDPPSSCSAGPVGDDLYHWQASIMGPPDSPYAGGVFFLSIHFPTDYPLKPPKIALTTKIYHPNINSNGNICLDILKDQWSPALTISKVLLSICSLLTDANPDDPLVPEIAHIYKQDRKKYEATAKEWTKKYAV.

In terms of domain architecture, UBC core spans 1–147; sequence MSLKRINKEL…AKEWTKKYAV (147 aa). The active-site Glycyl thioester intermediate is Cys-85.

The protein belongs to the ubiquitin-conjugating enzyme family.

It catalyses the reaction S-ubiquitinyl-[E1 ubiquitin-activating enzyme]-L-cysteine + [E2 ubiquitin-conjugating enzyme]-L-cysteine = [E1 ubiquitin-activating enzyme]-L-cysteine + S-ubiquitinyl-[E2 ubiquitin-conjugating enzyme]-L-cysteine.. It functions in the pathway protein modification; protein ubiquitination. In terms of biological role, E2 ubiquitin-conjugating enzyme that catalyzes the covalent attachment of ubiquitin to other proteins. Mediates the selective degradation of short-lived and abnormal proteins. Mediates ubiquitination of PEX5. This Candida albicans (Yeast) protein is Ubiquitin-conjugating enzyme E2 4 (UBC4).